The following is a 419-amino-acid chain: UDP-N-acetylglucosamine 1-carboxyvinyltransferase (419 aa).

Residue 22–23 (KN) coordinates phosphoenolpyruvate. Arg-95 is a binding site for UDP-N-acetyl-alpha-D-glucosamine. Cys-119 functions as the Proton donor in the catalytic mechanism. Cys-119 bears the 2-(S-cysteinyl)pyruvic acid O-phosphothioketal mark. UDP-N-acetyl-alpha-D-glucosamine is bound by residues 164–167 (KVSV), Asp-308, and Ile-330.

Belongs to the EPSP synthase family. MurA subfamily.

The protein resides in the cytoplasm. The catalysed reaction is phosphoenolpyruvate + UDP-N-acetyl-alpha-D-glucosamine = UDP-N-acetyl-3-O-(1-carboxyvinyl)-alpha-D-glucosamine + phosphate. The protein operates within cell wall biogenesis; peptidoglycan biosynthesis. Functionally, cell wall formation. Adds enolpyruvyl to UDP-N-acetylglucosamine. This is UDP-N-acetylglucosamine 1-carboxyvinyltransferase from Rickettsia felis (strain ATCC VR-1525 / URRWXCal2) (Rickettsia azadi).